Here is a 260-residue protein sequence, read N- to C-terminus: MICOS complex subunit mic25-a (260 aa).

The tract at residues 1 to 92 (MGGSESTGRK…KPTARGVGHQ (92 aa)) is disordered. The N-myristoyl glycine moiety is linked to residue glycine 2. A compositionally biased stretch (basic and acidic residues) spans 28-39 (RLSDEVVNRMKD). Positions 48 to 64 (STSTASGTTSGPTTFPS) are enriched in low complexity. The stretch at 94–187 (AEEDLYRRYE…LNSIEKKNLE (94 aa)) forms a coiled coil. The 43-residue stretch at 213–255 (DPVCMDLQSNILKCYAENKQERLNCSDLAKEYGKCVSAAQKNL) folds into the CHCH domain. 2 short sequence motifs (cx9C motif) span residues 216-226 (CMDLQSNILKC) and 237-247 (CSDLAKEYGKC). 2 disulfide bridges follow: cysteine 216-cysteine 247 and cysteine 226-cysteine 237.

Belongs to the MICOS complex subunit Mic19 family. Metazoan Mic25 subfamily. Component of the mitochondrial contact site and cristae organizing system (MICOS) complex (also known as MINOS or MitOS complex).

Its subcellular location is the mitochondrion inner membrane. In terms of biological role, component of the MICOS complex, a large protein complex of the mitochondrial inner membrane that plays crucial roles in the maintenance of crista junctions, inner membrane architecture, and formation of contact sites to the outer membrane. The protein is MICOS complex subunit mic25-a (chchd6-a) of Xenopus laevis (African clawed frog).